Reading from the N-terminus, the 135-residue chain is Sex-regulated protein janus-A (135 aa).

Position 37 (lysine 37) interacts with substrate. The active-site Proton acceptor is the histidine 63. Residue 104 to 106 (SQG) coordinates substrate.

Belongs to the janus family.

Its function is as follows. JanA and janB regulate somatic sex differentiation. The chain is Sex-regulated protein janus-A (janA) from Drosophila mauritiana (Fruit fly).